The chain runs to 207 residues: Outer-membrane lipoprotein LolB (207 aa).

Positions 1–21 (MPMRKRHFYRLLPLASLLLAA) are cleaved as a signal peptide. Cys-22 is lipidated: N-palmitoyl cysteine. Cys-22 is lipidated: S-diacylglycerol cysteine.

It belongs to the LolB family. As to quaternary structure, monomer.

The protein localises to the cell outer membrane. Plays a critical role in the incorporation of lipoproteins in the outer membrane after they are released by the LolA protein. This chain is Outer-membrane lipoprotein LolB, found in Yersinia pseudotuberculosis serotype O:1b (strain IP 31758).